The following is a 499-amino-acid chain: Inosine-5'-monophosphate dehydrogenase (499 aa).

CBS domains lie at 106–165 (IDRE…SDAV) and 169–225 (MTDE…GSAA). Residues Asp-260 and 308-310 (GIG) each bind NAD(+). K(+) is bound by residues Gly-310 and Gly-312. Residue Ser-313 participates in IMP binding. Cys-315 provides a ligand contact to K(+). Cys-315 functions as the Thioimidate intermediate in the catalytic mechanism. Residues 348 to 350 (DGG), 371 to 372 (GS), and 395 to 399 (YRGMG) each bind IMP. Arg-411 acts as the Proton acceptor in catalysis. An IMP-binding site is contributed by Glu-425. K(+) is bound by residues Glu-479, Gly-480, and His-481. The disordered stretch occupies residues 480–499 (GHPHDVMITDEAPNYSPQGE).

This sequence belongs to the IMPDH/GMPR family. Homotetramer. It depends on K(+) as a cofactor.

It carries out the reaction IMP + NAD(+) + H2O = XMP + NADH + H(+). It functions in the pathway purine metabolism; XMP biosynthesis via de novo pathway; XMP from IMP: step 1/1. Mycophenolic acid (MPA) is a non-competitive inhibitor that prevents formation of the closed enzyme conformation by binding to the same site as the amobile flap. In contrast, mizoribine monophosphate (MZP) is a competitive inhibitor that induces the closed conformation. MPA is a potent inhibitor of mammalian IMPDHs but a poor inhibitor of the bacterial enzymes. MZP is a more potent inhibitor of bacterial IMPDH. Functionally, catalyzes the conversion of inosine 5'-phosphate (IMP) to xanthosine 5'-phosphate (XMP), the first committed and rate-limiting step in the de novo synthesis of guanine nucleotides, and therefore plays an important role in the regulation of cell growth. The sequence is that of Inosine-5'-monophosphate dehydrogenase from Halobacterium salinarum (strain ATCC 700922 / JCM 11081 / NRC-1) (Halobacterium halobium).